The following is a 181-amino-acid chain: ATP synthase subunit delta (181 aa).

It belongs to the ATPase delta chain family. In terms of assembly, F-type ATPases have 2 components, F(1) - the catalytic core - and F(0) - the membrane proton channel. F(1) has five subunits: alpha(3), beta(3), gamma(1), delta(1), epsilon(1). F(0) has three main subunits: a(1), b(2) and c(10-14). The alpha and beta chains form an alternating ring which encloses part of the gamma chain. F(1) is attached to F(0) by a central stalk formed by the gamma and epsilon chains, while a peripheral stalk is formed by the delta and b chains.

It localises to the cell inner membrane. F(1)F(0) ATP synthase produces ATP from ADP in the presence of a proton or sodium gradient. F-type ATPases consist of two structural domains, F(1) containing the extramembraneous catalytic core and F(0) containing the membrane proton channel, linked together by a central stalk and a peripheral stalk. During catalysis, ATP synthesis in the catalytic domain of F(1) is coupled via a rotary mechanism of the central stalk subunits to proton translocation. Its function is as follows. This protein is part of the stalk that links CF(0) to CF(1). It either transmits conformational changes from CF(0) to CF(1) or is implicated in proton conduction. The polypeptide is ATP synthase subunit delta (Chlorobium limicola (strain DSM 245 / NBRC 103803 / 6330)).